A 491-amino-acid chain; its full sequence is Cobyric acid synthase (491 aa).

Residues 250 to 439 (EVTIAVIRLP…LHGIFDNGAW (190 aa)) enclose the GATase cobBQ-type domain. Catalysis depends on C331, which acts as the Nucleophile. The active site involves H431.

The protein belongs to the CobB/CobQ family. CobQ subfamily.

It participates in cofactor biosynthesis; adenosylcobalamin biosynthesis. Functionally, catalyzes amidations at positions B, D, E, and G on adenosylcobyrinic A,C-diamide. NH(2) groups are provided by glutamine, and one molecule of ATP is hydrogenolyzed for each amidation. The chain is Cobyric acid synthase from Synechococcus elongatus (strain ATCC 33912 / PCC 7942 / FACHB-805) (Anacystis nidulans R2).